A 299-amino-acid polypeptide reads, in one-letter code: Large ribosomal subunit protein uL18 (299 aa).

It belongs to the universal ribosomal protein uL18 family. As to quaternary structure, component of the large ribosomal subunit (LSU). Interacts with Fmr1 to form the RNA-induced silencing complex (RISC), a ribonucleoprotein (RNP) complex involved in translation regulation, other components of the complex are Rm62, RpL11, AGO2 and Dcr-1.

It is found in the cytoplasm. The protein resides in the nucleus. Functionally, component of the ribosome, a large ribonucleoprotein complex responsible for the synthesis of proteins in the cell. The small ribosomal subunit (SSU) binds messenger RNAs (mRNAs) and translates the encoded message by selecting cognate aminoacyl-transfer RNA (tRNA) molecules. The large subunit (LSU) contains the ribosomal catalytic site termed the peptidyl transferase center (PTC), which catalyzes the formation of peptide bonds, thereby polymerizing the amino acids delivered by tRNAs into a polypeptide chain. The nascent polypeptides leave the ribosome through a tunnel in the LSU and interact with protein factors that function in enzymatic processing, targeting, and the membrane insertion of nascent chains at the exit of the ribosomal tunnel. This is Large ribosomal subunit protein uL18 (RpL5) from Drosophila melanogaster (Fruit fly).